A 237-amino-acid polypeptide reads, in one-letter code: 7-carboxy-7-deazaguanine synthase (237 aa).

Substrate contacts are provided by residues 15 to 17 (LSG) and arginine 30. In terms of domain architecture, Radical SAM core spans 21–233 (STGIPTIFVR…IQTHKYIWGD (213 aa)). [4Fe-4S] cluster contacts are provided by cysteine 34, cysteine 38, and cysteine 48. Threonine 50 provides a ligand contact to Mg(2+). Threonine 84 contacts substrate. Glycine 86 is a binding site for S-adenosyl-L-methionine.

This sequence belongs to the radical SAM superfamily. 7-carboxy-7-deazaguanine synthase family. In terms of assembly, homodimer. Requires [4Fe-4S] cluster as cofactor. The cofactor is S-adenosyl-L-methionine. Mg(2+) is required as a cofactor.

The catalysed reaction is 6-carboxy-5,6,7,8-tetrahydropterin + H(+) = 7-carboxy-7-deazaguanine + NH4(+). It functions in the pathway purine metabolism; 7-cyano-7-deazaguanine biosynthesis. Functionally, catalyzes the complex heterocyclic radical-mediated conversion of 6-carboxy-5,6,7,8-tetrahydropterin (CPH4) to 7-carboxy-7-deazaguanine (CDG), a step common to the biosynthetic pathways of all 7-deazapurine-containing compounds. This chain is 7-carboxy-7-deazaguanine synthase, found in Leptospira interrogans serogroup Icterohaemorrhagiae serovar Lai (strain 56601).